A 360-amino-acid chain; its full sequence is Alpha-2-macroglobulin receptor-associated protein (360 aa).

The first 28 residues, 1-28 (MAPRRERVSTLPRLQLLVLLLLPLMLVP), serve as a signal peptide directing secretion. Phosphoserine is present on residues S53 and S138. Positions 184–302 (EKIQEYNVLL…KHNHYQKQLE (119 aa)) form a coiled coil. Residues 240-356 (RLRKVSHQGY…DLSSRVSRAR (117 aa)) are LDL receptor binding. N271 carries an N-linked (GlcNAc...) asparagine glycan. Residues 357-360 (HNEL) carry the Prevents secretion from ER motif.

Belongs to the alpha-2-MRAP family. As to quaternary structure, interacts with the LRP1/alpha-2-macroglobulin receptor heavy and light chains; the interaction is transient and coincides with a reduction of ligand binding by the receptor. Interacts with LRP2/glycoprotein 330. Interacts with LRP1B; binding is followed by internalization and degradation. Interacts with LDLR. Interacts with SORL1. Interacts with LRP1; this interaction is followed by rapid internalization. Post-translationally, N-glycosylated. Highly expressed in PYS-2 parietal endoderm cells and in the kidney. The RNA level increased about 10-fold during differentiation of F9 embryonal carcinoma cells to parietal endoderm cells.

It is found in the rough endoplasmic reticulum lumen. Its subcellular location is the endoplasmic reticulum-Golgi intermediate compartment lumen. It localises to the golgi apparatus. The protein localises to the cis-Golgi network. The protein resides in the golgi apparatus lumen. It is found in the endosome lumen. Its subcellular location is the cell surface. Functionally, molecular chaperone for LDL receptor-related proteins that may regulate their ligand binding activity along the secretory pathway. In Mus musculus (Mouse), this protein is Alpha-2-macroglobulin receptor-associated protein (Lrpap1).